A 104-amino-acid chain; its full sequence is Large ribosomal subunit protein uL24 (104 aa).

Belongs to the universal ribosomal protein uL24 family. Part of the 50S ribosomal subunit.

Its function is as follows. One of two assembly initiator proteins, it binds directly to the 5'-end of the 23S rRNA, where it nucleates assembly of the 50S subunit. In terms of biological role, one of the proteins that surrounds the polypeptide exit tunnel on the outside of the subunit. The chain is Large ribosomal subunit protein uL24 from Serratia proteamaculans (strain 568).